The primary structure comprises 519 residues: Serine/threonine-protein kinase RIO1 (519 aa).

The segment covering 1-10 (MTPAPEPQDP) has biased composition (pro residues). Residues 1–54 (MTPAPEPQDPPTIHEPVATEQTDDISDWDVESDYEDGYGAPSKSQAQGGASAAD) are disordered. Acidic residues predominate over residues 21 to 36 (QTDDISDWDVESDYED). Positions 39–53 (GAPSKSQAQGGASAA) are enriched in low complexity. In terms of domain architecture, Protein kinase spans 122–519 (SEIYGTISTG…KLVAANKKRK (398 aa)). The ATP site is built by Lys154 and Leu228. The active-site Proton acceptor is Asp281. Mg(2+) is bound by residues Asn286 and Asp298. Residue Asp298 is the 4-aspartylphosphate intermediate of the active site. Residues 418–519 (ADSKVPESTG…KLVAANKKRK (102 aa)) form a disordered region. The segment covering 439–464 (GSEDEEGDEGESGEVESGDEEREEGE) has biased composition (acidic residues). The tract at residues 440 to 519 (SEDEEGDEGE…KLVAANKKRK (80 aa)) is association with (pre-)40S ribosomal particle. 2 stretches are compositionally biased toward basic residues: residues 470–489 (KKRP…AHKM) and 497–519 (EKRK…KKRK).

This sequence belongs to the protein kinase superfamily. RIO-type Ser/Thr kinase family. The cofactor is Mg(2+). Autophosphorylated.

The protein resides in the cytoplasm. It catalyses the reaction L-seryl-[protein] + ATP = O-phospho-L-seryl-[protein] + ADP + H(+). The catalysed reaction is L-threonyl-[protein] + ATP = O-phospho-L-threonyl-[protein] + ADP + H(+). It carries out the reaction ATP + H2O = ADP + phosphate + H(+). Its function is as follows. Involved in the final steps of cytoplasmic maturation of the 40S ribosomal subunit. In vitro, has strong ATPase activity and only low protein kinase activity. The polypeptide is Serine/threonine-protein kinase RIO1 (Chaetomium thermophilum (strain DSM 1495 / CBS 144.50 / IMI 039719) (Thermochaetoides thermophila)).